The sequence spans 194 residues: Large ribosomal subunit protein bL9 (194 aa).

This sequence belongs to the bacterial ribosomal protein bL9 family.

Binds to the 23S rRNA. The protein is Large ribosomal subunit protein bL9 of Rhodopseudomonas palustris (strain BisA53).